Here is a 1369-residue protein sequence, read N- to C-terminus: DNA-directed RNA polymerase subunit beta' (1369 aa).

A disordered region spans residues 1-26 (MTSSSPKTRKSSTKSKAKRGSKSKKA). Positions 7-24 (KTRKSSTKSKAKRGSKSK) are enriched in basic residues. Zn(2+) contacts are provided by Cys253, Cys320, Cys327, and Cys330. The interval 1294–1369 (TVDMPSSPVA…LQEEGLLSDE (76 aa)) is disordered. Residues 1342-1351 (DDELSAEDQM) show a composition bias toward acidic residues. Residues 1357-1369 (LEGLQEEGLLSDE) show a composition bias toward low complexity.

The protein belongs to the RNA polymerase beta' chain family. RpoC2 subfamily. In cyanobacteria the RNAP catalytic core is composed of 2 alpha, 1 beta, 1 beta', 1 gamma and 1 omega subunit. When a sigma factor is associated with the core the holoenzyme is formed, which can initiate transcription. It depends on Zn(2+) as a cofactor.

The catalysed reaction is RNA(n) + a ribonucleoside 5'-triphosphate = RNA(n+1) + diphosphate. In terms of biological role, DNA-dependent RNA polymerase catalyzes the transcription of DNA into RNA using the four ribonucleoside triphosphates as substrates. The polypeptide is DNA-directed RNA polymerase subunit beta' (Prochlorococcus marinus (strain NATL2A)).